Here is a 498-residue protein sequence, read N- to C-terminus: Succinate-semialdehyde dehydrogenase [NADP(+)] 1 (498 aa).

247–252 (GSTNVG) contacts NAD(+). Catalysis depends on residues Glu-269 and Cys-303.

This sequence belongs to the aldehyde dehydrogenase family. In terms of assembly, homotetramer.

The protein resides in the cytoplasm. The enzyme catalyses succinate semialdehyde + NAD(+) + H2O = succinate + NADH + 2 H(+). It carries out the reaction succinate semialdehyde + NADP(+) + H2O = succinate + NADPH + 2 H(+). Its pathway is amino-acid degradation; 4-aminobutanoate degradation. In terms of biological role, catalyzes the oxidation of succinate semialdehyde to succinate. Can utilize both NAD(+) or NADP(+) as a coenzyme. Functions in a gamma-aminobutyrate (GABA) degradation pathway that allows growth utilizing GABA as a nitrogen source. Functions in the GABA shunt, which allows to bypass 2 reactions in the TCA cycle by removing alpha-ketoglutarate from the cycle and feeding succinate and NADH back into the cycle. This chain is Succinate-semialdehyde dehydrogenase [NADP(+)] 1 (ssd1), found in Schizosaccharomyces pombe (strain 972 / ATCC 24843) (Fission yeast).